The chain runs to 356 residues: Arginine kinase 1 (356 aa).

Residues 6–91 form the Phosphagen kinase N-terminal domain; that stretch reads VLAKLEEGYA…FDPIIEDYHG (86 aa). 64–68 contacts substrate; sequence GVGIY. Residues 119-356 enclose the Phosphagen kinase C-terminal domain; it reads YVISTRVRCG…TELIKLEKSL (238 aa). Residues 122 to 126 and His185 contribute to the ATP site; that span reads STRVR. Position 225 (Glu225) interacts with substrate. Arg229 provides a ligand contact to ATP. Cys271 lines the substrate pocket. ATP is bound by residues 280 to 284 and 309 to 314; these read RASVH and RGTRGE. Glu314 is a substrate binding site.

Belongs to the ATP:guanido phosphotransferase family.

It catalyses the reaction L-arginine + ATP = N(omega)-phospho-L-arginine + ADP + H(+). This Drosophila melanogaster (Fruit fly) protein is Arginine kinase 1.